The following is a 371-amino-acid chain: MLRSAGRVAAVALLALFALGCVSAAAKPSTDRLVAAIKSKNLSAVVDALSVKGLDVNTPDSTRRLPLVEAARSRDARLVGALLDQGALARVSDGTTTPLHLSMQGGSAAIVKLLLAHGADPNAKDKTGASARSTAAAVKELADLLKQWDARGAMAFEDEPGAWIREERDGQSYYWKPANGESRWAVPPSCAWQRVTVQGHPIKYINSLTGQETTRVPPALAWARVTAADGSALWLNWASRVASAAATAPAELPAELAAELAMHPNRRWYNTATREYVYTDPAYATPWRELVDEASGAPFFFNVETGDTTWELPAALAWTEVIESSSGADGESGSGSEAGPRYFHNTVSGEVAWSAPEGSRHVFVEASAADL.

The signal sequence occupies residues 1-24 (MLRSAGRVAAVALLALFALGCVSA). A glycan (N-linked (GlcNAc...) asparagine) is linked at N41. 2 ANK repeats span residues 62–91 (TRRLPLVEAARSRDARLVGALLDQGALARV) and 94–123 (GTTTPLHLSMQGGSAAIVKLLLAHGADPNA). 2 WW domains span residues 159-187 (EPGAWIREERDGQSYYWKPANGESRWAVP) and 283-313 (YATPWRELVDEASGAPFFFNVETGDTTWELP).

The protein resides in the endoplasmic reticulum lumen. In terms of biological role, may have a role in the remodeling of the endoplasmic reticulum upon zygote formation. This is Zygote-specific protein 3 (ZYS3) from Chlamydomonas reinhardtii (Chlamydomonas smithii).